Here is a 221-residue protein sequence, read N- to C-terminus: Probable septum site-determining protein MinC (221 aa).

It belongs to the MinC family. As to quaternary structure, interacts with MinD and FtsZ.

Functionally, cell division inhibitor that blocks the formation of polar Z ring septums. Rapidly oscillates between the poles of the cell to destabilize FtsZ filaments that have formed before they mature into polar Z rings. Prevents FtsZ polymerization. In Shewanella frigidimarina (strain NCIMB 400), this protein is Probable septum site-determining protein MinC.